The following is a 1147-amino-acid chain: ATP-dependent helicase/deoxyribonuclease subunit B (1147 aa).

8–15 (GGSGAGKS) is a binding site for ATP. 4 residues coordinate [4Fe-4S] cluster: Cys-780, Cys-1092, Cys-1095, and Cys-1101.

Belongs to the helicase family. AddB/RexB type 1 subfamily. Heterodimer of AddA and AddB. Requires Mg(2+) as cofactor. [4Fe-4S] cluster serves as cofactor.

Functionally, the heterodimer acts as both an ATP-dependent DNA helicase and an ATP-dependent, dual-direction single-stranded exonuclease. Recognizes the chi site generating a DNA molecule suitable for the initiation of homologous recombination. The AddB subunit has 5' -&gt; 3' nuclease activity but not helicase activity. The protein is ATP-dependent helicase/deoxyribonuclease subunit B of Lachnoclostridium phytofermentans (strain ATCC 700394 / DSM 18823 / ISDg) (Clostridium phytofermentans).